A 209-amino-acid chain; its full sequence is ATP-dependent Clp protease proteolytic subunit (209 aa).

The active-site Nucleophile is S106. H131 is an active-site residue.

It belongs to the peptidase S14 family. In terms of assembly, fourteen ClpP subunits assemble into 2 heptameric rings which stack back to back to give a disk-like structure with a central cavity, resembling the structure of eukaryotic proteasomes.

The protein localises to the cytoplasm. It catalyses the reaction Hydrolysis of proteins to small peptides in the presence of ATP and magnesium. alpha-casein is the usual test substrate. In the absence of ATP, only oligopeptides shorter than five residues are hydrolyzed (such as succinyl-Leu-Tyr-|-NHMec, and Leu-Tyr-Leu-|-Tyr-Trp, in which cleavage of the -Tyr-|-Leu- and -Tyr-|-Trp bonds also occurs).. Its function is as follows. Cleaves peptides in various proteins in a process that requires ATP hydrolysis. Has a chymotrypsin-like activity. Plays a major role in the degradation of misfolded proteins. The sequence is that of ATP-dependent Clp protease proteolytic subunit from Brucella suis biovar 1 (strain 1330).